The chain runs to 301 residues: GTPase Era (301 aa).

The region spanning 7–175 (YCGFIAIVGR…ASIVRKHLPE (169 aa)) is the Era-type G domain. A G1 region spans residues 15–22 (GRPNVGKS). GTP is bound at residue 15-22 (GRPNVGKS). The interval 41–45 (QTTRH) is G2. The interval 62-65 (DTPG) is G3. Residues 62–66 (DTPGL) and 124–127 (NKVD) contribute to the GTP site. Residues 124–127 (NKVD) are G4. The segment at 154-156 (ISA) is G5. A KH type-2 domain is found at 206-283 (LGAELPYSVT…HLELWVKVKS (78 aa)).

Belongs to the TRAFAC class TrmE-Era-EngA-EngB-Septin-like GTPase superfamily. Era GTPase family. In terms of assembly, monomer.

The protein resides in the cytoplasm. The protein localises to the cell inner membrane. An essential GTPase that binds both GDP and GTP, with rapid nucleotide exchange. Plays a role in 16S rRNA processing and 30S ribosomal subunit biogenesis and possibly also in cell cycle regulation and energy metabolism. This Salmonella arizonae (strain ATCC BAA-731 / CDC346-86 / RSK2980) protein is GTPase Era.